We begin with the raw amino-acid sequence, 60 residues long: Large ribosomal subunit protein uL30 (60 aa).

The protein belongs to the universal ribosomal protein uL30 family. Part of the 50S ribosomal subunit.

This is Large ribosomal subunit protein uL30 from Flavobacterium johnsoniae (strain ATCC 17061 / DSM 2064 / JCM 8514 / BCRC 14874 / CCUG 350202 / NBRC 14942 / NCIMB 11054 / UW101) (Cytophaga johnsonae).